The chain runs to 263 residues: Renal glandular kallikrein (263 aa).

Residues 1 to 18 (MWFLILFLALFLGGIDAA) form the signal peptide. The propeptide at 19–24 (PPVQSR) is activation peptide. A Peptidase S1 domain is found at 25–260 (IIGGFNCEKN…YRSWIKDVMA (236 aa)). Cystine bridges form between C31–C175, C50–C66, C153–C221, C186–C200, and C211–C236. Residue H65 is the Charge relay system of the active site. N102 is a glycosylation site (N-linked (GlcNAc...) asparagine). D121 functions as the Charge relay system in the catalytic mechanism. The active-site Charge relay system is S215.

It belongs to the peptidase S1 family. Kallikrein subfamily.

The enzyme catalyses Preferential cleavage of Arg-|-Xaa bonds in small molecule substrates. Highly selective action to release kallidin (lysyl-bradykinin) from kininogen involves hydrolysis of Met-|-Xaa or Leu-|-Xaa.. Functionally, glandular kallikreins cleave Met-Lys and Arg-Ser bonds in kininogen to release Lys-bradykinin. This chain is Renal glandular kallikrein, found in Mastomys natalensis (African soft-furred rat).